Consider the following 346-residue polypeptide: Protein RecA (346 aa).

G65–T72 is a binding site for ATP.

Belongs to the RecA family.

The protein localises to the cytoplasm. Its function is as follows. Can catalyze the hydrolysis of ATP in the presence of single-stranded DNA, the ATP-dependent uptake of single-stranded DNA by duplex DNA, and the ATP-dependent hybridization of homologous single-stranded DNAs. It interacts with LexA causing its activation and leading to its autocatalytic cleavage. In Enterococcus hirae (strain ATCC 9790 / DSM 20160 / JCM 8729 / LMG 6399 / NBRC 3181 / NCIMB 6459 / NCDO 1258 / NCTC 12367 / WDCM 00089 / R), this protein is Protein RecA.